Here is a 511-residue protein sequence, read N- to C-terminus: Thioredoxin reductase 2, mitochondrial (511 aa).

The transit peptide at 1–21 (MAALRGAAARFRGRAPGGARG) directs the protein to the mitochondrion. 29-58 (DLLVIGGGSGGLACAKEAAQLGKKVAVLDY) lines the FAD pocket. C74 and C79 are joined by a disulfide. K316 is subject to N6-succinyllysine. H484 (proton acceptor) is an active-site residue. Positions 509-510 (CU) form a cross-link, cysteinyl-selenocysteine (Cys-Sec). U510 is a non-standard amino acid (selenocysteine).

This sequence belongs to the class-I pyridine nucleotide-disulfide oxidoreductase family. As to quaternary structure, homodimer. FAD serves as cofactor.

The protein resides in the mitochondrion. It catalyses the reaction [thioredoxin]-dithiol + NADP(+) = [thioredoxin]-disulfide + NADPH + H(+). Its activity is regulated as follows. Inhibited by 1-chloro-2,4-dinitrobenzene and by zinc, calcium, magnesium and Fe(2+) ions. Functionally, involved in the control of reactive oxygen species levels and the regulation of mitochondrial redox homeostasis. Maintains thioredoxin in a reduced state. May play a role in redox-regulated cell signaling. This is Thioredoxin reductase 2, mitochondrial (TXNRD2) from Bos taurus (Bovine).